Reading from the N-terminus, the 276-residue chain is Undecaprenyl-diphosphatase 2 (276 aa).

Helical transmembrane passes span 1–21, 44–64, 87–107, 114–134, 150–170, 190–210, 222–242, and 251–271; these read MSLW…LFPV, QLLP…LWYF, GHLM…GLLL, VFHD…LLWL, MTFK…IPGF, AAEF…VLEL, DALL…RFLM, and LASF…WFML.

The protein belongs to the UppP family.

Its subcellular location is the cell inner membrane. The enzyme catalyses di-trans,octa-cis-undecaprenyl diphosphate + H2O = di-trans,octa-cis-undecaprenyl phosphate + phosphate + H(+). Functionally, catalyzes the dephosphorylation of undecaprenyl diphosphate (UPP). Confers resistance to bacitracin. The sequence is that of Undecaprenyl-diphosphatase 2 from Burkholderia lata (strain ATCC 17760 / DSM 23089 / LMG 22485 / NCIMB 9086 / R18194 / 383).